Consider the following 1248-residue polypeptide: MNGYVEFSPSPTKESVEPQPSQAVLQEDVDMSSGSSGHENCSMGRDSQGSDCDDNGKELRMLVEPSDTHSSPDAFRLMMTEPQHNPSTSGCSSEQSAKANAHKELIRTLRELKVHLPADKKAKGKASTLAILKYALRSVKQVKANEEYYQLLMSSESQPCSMDVPSYTVEQVEGITSEYIVKNADMFAVAVSLVSGKILYISNQVASIFHCKKDAFSDAKFVEFLAPHDVSVFHSYTTPYKLPPWSMCCGVDSFTQECMEEKSFFCRVSVGKHHESEIRYQPFRMTPYLVKVQEQQGAESQLCCLLLAERIHSGYEAPRIPPEKRIFTTTHIPNCLFQDVDERAVPLLGYLPQDLIETPVLVQLHPSDRPLMLAIHKKILQAGGQPFDYSPIRFRARNGEYITLDTSWSSFINPWSRKISFIIGRHKVRVGPLNEDVFAASPCPEGKTPHPSIQELTEQIHRLLMQPVPHSGSSGYGSLGSNGSHEHLMSQTSSSDSNGHEESRWRKSGISKNGSKTQTRSHFSHESGEQKEIAVTEMQSSTPAQAKAAPTVERDSSGSSLPKASFPEELAYKNQPACSYQQISCLDSVIRYLESCNEAATLKRKCEFPANIPSRKATVSPGLHAEEAAPPPSKVSSHAEVRARLSSLTLPDKAESVVSLTSQCSYSSTIVHVGDKKPQPELETVEDAVSGPESLDGAPGGLSQEKGPLQKLGLTKEVLAAHTQREEQGFLQRFREVSRLGALQAHRQNYRAQASERAAPGLRNASGMDSSWKKTGKNRKLKSKRVKTRDSSESTGSGGPVSHRPPLVGLNATAWSPSDTSQSSCPSAPFPAPVPAYPLPVFEAPGITSTPAPPEAAHSSFTVPVVPMGAQPDFAVQPLPLAAPLAPVLAFMLPSYPFPPANPNLSHAFFPGQPHFPAQPTFASEMTPASQADFPSQTPLLRQQCTCPVTPPAATVTSGRASPPLFQSRGSSPLQLNLLQLEEAPEGSTGAAGTSGTTGTAAAGLDCTPGTSRDRQPKAPSTCKEPSDTQNSDALSTSSDLLNLLLAEDLCSATGSALSGSGASATSDSLGSGSLGCDASRSGAGSSDTSHTSKYFGSIDSSENNHKAKVSTDTEESEQFIKYVLQDPIWLLVANTDDSVMMTYQLPSRDLESVLREGRERLKLLQRAQPRFTEGQRRELREVHPWVQTGGLPAAIDVAECVYCKSERKGDICLPYEEDSPSPGLCDTSEAKEEEGEQLTGPRIEAQT.

The interval 1–57 (MNGYVEFSPSPTKESVEPQPSQAVLQEDVDMSSGSSGHENCSMGRDSQGSDCDDNGK) is disordered. Polar residues-rich tracts occupy residues 9–24 (PSPT…SQAV) and 32–50 (SSGS…SQGS). The short motif at 105-114 (LIRTLRELKV) is the Nuclear export signal 1 element. One can recognise a PAS 1 domain in the interval 175–242 (ITSEYIVKNA…FHSYTTPYKL (68 aa)). The short motif at 302–306 (LCCLL) is the LXXLL element. One can recognise a PAS 2 domain in the interval 315–381 (YEAPRIPPEK…MLAIHKKILQ (67 aa)). Positions 389–432 (YSPIRFRARNGEYITLDTSWSSFINPWSRKISFIIGRHKVRVGP) constitute a PAC domain. A Nuclear export signal 2 motif is present at residues 456 to 465 (LTEQIHRLLM). Disordered stretches follow at residues 467–563 (PVPH…SLPK) and 619–638 (VSPG…VSSH). The tract at residues 474–478 (SGYGS) is important for protein stability. A CSNK1E binding domain region spans residues 506–706 (RKSGISKNGS…GAPGGLSQEK (201 aa)). The span at 510-521 (ISKNGSKTQTRS) shows a compositional bias: polar residues. Residues S521, S524, S527, and S540 each carry the phosphoserine modification. Basic and acidic residues predominate over residues 523–534 (FSHESGEQKEIA). Phosphoserine is present on residues S656, S690, S694, S703, and S755. Disordered stretches follow at residues 675–708 (DKKP…EKGP) and 751–829 (RAQA…PSAP). The Nuclear localization signal motif lies at 773–789 (KKTGKNRKLKSKRVKTR). Over residues 774-787 (KTGKNRKLKSKRVK) the composition is skewed to basic residues. Positions 816–827 (SPSDTSQSSCPS) are enriched in low complexity. An interaction with PPARG region spans residues 873–1058 (DFAVQPLPLA…DLCSATGSAL (186 aa)). S930 is modified (phosphoserine). The disordered stretch occupies residues 950-971 (TPPAATVTSGRASPPLFQSRGS). Phosphothreonine is present on T955. A Phosphoserine modification is found at S962. Residues 974–981 (LQLNLLQL) carry the Nuclear export signal 3 motif. The tract at residues 984 to 1035 (APEGSTGAAGTSGTTGTAAAGLDCTPGTSRDRQPKAPSTCKEPSDTQNSDAL) is disordered. Over residues 987–1004 (GSTGAAGTSGTTGTAAAG) the composition is skewed to low complexity. The LXXLL signature appears at 1042–1046 (LNLLL). Residues 1057–1080 (ALSGSGASATSDSLGSGSLGCDAS) show a composition bias toward low complexity. Residues 1057–1113 (ALSGSGASATSDSLGSGSLGCDASRSGAGSSDTSHTSKYFGSIDSSENNHKAKVSTD) form a disordered region. A compositionally biased stretch (polar residues) spans 1083-1102 (GAGSSDTSHTSKYFGSIDSS). The segment covering 1103–1112 (ENNHKAKVST) has biased composition (basic and acidic residues). S1117 is modified (phosphoserine). A CRY binding domain region spans residues 1148–1248 (SRDLESVLRE…LTGPRIEAQT (101 aa)). Residues 1215–1248 (PYEEDSPSPGLCDTSEAKEEEGEQLTGPRIEAQT) are disordered.

As to quaternary structure, homodimer. Component of the circadian core oscillator, which includes the CRY proteins, CLOCK or NPAS2, BMAL1 or BMAL2, CSNK1D and/or CSNK1E, TIMELESS, and the PER proteins. Interacts with CLOCK-BMAL1 (off DNA). Interacts with BMAL2. Interacts directly with PER1 and PER3, and through a C-terminal domain, with CRY1 and CRY2. Interacts (via PAS 2 domain) with TIMELESS. Interacts with NFIL3. Different large complexes have been identified with different repressive functions. The core of PER complexes is composed of at least PER1, PER2, PER3, CRY1, CRY2, CSNK1D and/or CSNK1E. The large PER complex involved in the repression of transcriptional termination is composed of at least PER2, CDK9, DDX5, DHX9, NCBP1 and POLR2A (active). The large PER complex involved in the histone deacetylation is composed of at least HDAC1, PER2, SFPQ and SIN3A. The large PER complex involved in the histone methylation is composed of at least PER2, CBX3, TRIM28, SUV39H1 and/or SUV39H2; CBX3 mediates the formation of the complex. Interacts with SETX; the interaction inhibits termination of circadian target genes. Interacts with the nuclear receptors HNF4A, NR1D1, NR4A2, RORA, PPARA, PPARG and THRA; the interaction with at least PPARG is ligand dependent. Interacts with PML. Interacts (phosphorylated) with BTRC and FBXW11; the interactions trigger proteasomal degradation. Interacts with NONO and SFPQ. Interacts with PRKCDBP. Interacts with MAGEL2. Interacts with MAP1LC3B. Interacts with HNF4A. In terms of processing, acetylated. Deacetylated by SIRT1, resulting in decreased protein stability. Deacetylated by SIRT6, preventing its degradation by the proteasome, resulting in increased protein stability. Post-translationally, phosphorylated by CSNK1E and CSNK1D. Phosphorylation results in PER2 protein degradation. May be dephosphorylated by PP1. Ubiquitinated, leading to its proteasomal degradation. Ubiquitination may be inhibited by CRY1. As to expression, expressed in the brain, mainly in the suprachiasmatic nucleus (SCN). Expression also found in the harderian gland, lung, eye, intestine, liver and skeletal muscle.

It localises to the nucleus. The protein localises to the cytoplasm. It is found in the perinuclear region. Functionally, transcriptional repressor which forms a core component of the circadian clock. The circadian clock, an internal time-keeping system, regulates various physiological processes through the generation of approximately 24 hour circadian rhythms in gene expression, which are translated into rhythms in metabolism and behavior. It is derived from the Latin roots 'circa' (about) and 'diem' (day) and acts as an important regulator of a wide array of physiological functions including metabolism, sleep, body temperature, blood pressure, endocrine, immune, cardiovascular, and renal function. Consists of two major components: the central clock, residing in the suprachiasmatic nucleus (SCN) of the brain, and the peripheral clocks that are present in nearly every tissue and organ system. Both the central and peripheral clocks can be reset by environmental cues, also known as Zeitgebers (German for 'timegivers'). The predominant Zeitgeber for the central clock is light, which is sensed by retina and signals directly to the SCN. The central clock entrains the peripheral clocks through neuronal and hormonal signals, body temperature and feeding-related cues, aligning all clocks with the external light/dark cycle. Circadian rhythms allow an organism to achieve temporal homeostasis with its environment at the molecular level by regulating gene expression to create a peak of protein expression once every 24 hours to control when a particular physiological process is most active with respect to the solar day. Transcription and translation of core clock components (CLOCK, NPAS2, BMAL1, BMAL2, PER1, PER2, PER3, CRY1 and CRY2) plays a critical role in rhythm generation, whereas delays imposed by post-translational modifications (PTMs) are important for determining the period (tau) of the rhythms (tau refers to the period of a rhythm and is the length, in time, of one complete cycle). A diurnal rhythm is synchronized with the day/night cycle, while the ultradian and infradian rhythms have a period shorter and longer than 24 hours, respectively. Disruptions in the circadian rhythms contribute to the pathology of cardiovascular diseases, cancer, metabolic syndrome and aging. A transcription/translation feedback loop (TTFL) forms the core of the molecular circadian clock mechanism. Transcription factors, CLOCK or NPAS2 and BMAL1 or BMAL2, form the positive limb of the feedback loop, act in the form of a heterodimer and activate the transcription of core clock genes and clock-controlled genes (involved in key metabolic processes), harboring E-box elements (5'-CACGTG-3') within their promoters. The core clock genes: PER1/2/3 and CRY1/2 which are transcriptional repressors form the negative limb of the feedback loop and interact with the CLOCK|NPAS2-BMAL1|BMAL2 heterodimer inhibiting its activity and thereby negatively regulating their own expression. This heterodimer also activates nuclear receptors NR1D1/2 and RORA/B/G, which form a second feedback loop and which activate and repress BMAL1 transcription, respectively. PER1 and PER2 proteins transport CRY1 and CRY2 into the nucleus with appropriate circadian timing, but also contribute directly to repression of clock-controlled target genes through interaction with several classes of RNA-binding proteins, helicases and others transcriptional repressors. PER appears to regulate circadian control of transcription by at least three different modes. First, interacts directly with the CLOCK-BMAL1 at the tail end of the nascent transcript peak to recruit complexes containing the SIN3-HDAC that remodel chromatin to repress transcription. Second, brings H3K9 methyltransferases such as SUV39H1 and SUV39H2 to the E-box elements of the circadian target genes, like PER2 itself or PER1. The recruitment of each repressive modifier to the DNA seems to be very precisely temporally orchestrated by the large PER complex, the deacetylases acting before than the methyltransferases. Additionally, large PER complexes are also recruited to the target genes 3' termination site through interactions with RNA-binding proteins and helicases that may play a role in transcription termination to regulate transcription independently of CLOCK-BMAL1 interactions. Recruitment of large PER complexes to the elongating polymerase at PER and CRY termination sites inhibited SETX action, impeding RNA polymerase II release and thereby repressing transcriptional reinitiation. May propagate clock information to metabolic pathways via the interaction with nuclear receptors. Coactivator of PPARA and corepressor of NR1D1, binds rhythmically at the promoter of nuclear receptors target genes like BMAL1 or G6PC1. Directly and specifically represses PPARG proadipogenic activity by blocking PPARG recruitment to target promoters and thereby transcriptional activation. Required for fatty acid and lipid metabolism, is involved as well in the regulation of circulating insulin levels. Plays an important role in the maintenance of cardiovascular functions through the regulation of NO and vasodilatatory prostaglandins production in aortas. Controls circadian glutamate uptake in synaptic vesicles through the regulation of VGLUT1 expression. May also be involved in the regulation of inflammatory processes. Represses the CLOCK-BMAL1 induced transcription of BHLHE40/DEC1 and ATF4. Negatively regulates the formation of the TIMELESS-CRY1 complex by competing with TIMELESS for binding to CRY1. This is Period circadian protein homolog 2 (PER2) from Spalax judaei (Judean Mountains blind mole rat).